A 96-amino-acid polypeptide reads, in one-letter code: MGSGYAKKKKEAKIMEQQFLEMEASLEQKRYEGQAGNGLVSVVINGKCDIVSIKVQPTCLDPEEPEVVEDLFRSAFKEAKEAMDKEMSVMRAGMPF.

It belongs to the YbaB/EbfC family. As to quaternary structure, homodimer.

Its subcellular location is the cytoplasm. The protein resides in the nucleoid. Functionally, binds to DNA and alters its conformation. May be involved in regulation of gene expression, nucleoid organization and DNA protection. This Chlamydia caviae (strain ATCC VR-813 / DSM 19441 / 03DC25 / GPIC) (Chlamydophila caviae) protein is Nucleoid-associated protein CCA_00330.